The following is a 378-amino-acid chain: Acid phosphatase-like protein XcAP-2 (378 aa).

The N-terminal stretch at 1 to 19 is a signal peptide; that stretch reads MKTTILLLVVLTIVQLSKA. Disulfide bonds link Cys147–Cys374, Cys168–Cys220, and Cys347–Cys351.

Belongs to the histidine acid phosphatase family.

It localises to the secreted. Its function is as follows. Probably modulates blood feeding of fleas on vertebrate species by binding and sequestering different mediators involved in the host response. Binds histamine. Binds leukotriene B4, leukotriene C4, leukotriene D4 and leukotriene E4. Does not bind serotonin, adrenaline, noradrenaline, ADP, and stable analogs of thromboxane A2: U-46619 and cTXA2. The chain is Acid phosphatase-like protein XcAP-2 from Xenopsylla cheopis (Oriental rat flea).